A 246-amino-acid polypeptide reads, in one-letter code: Granzyme H (246 aa).

An N-terminal signal peptide occupies residues 1 to 18 (MQPFLLLLAFLLTPGAGT). A propeptide spans 19 to 20 (EE) (activation peptide). Residues 21–244 (IIGGHEAKPH…FLPWIKRTMK (224 aa)) form the Peptidase S1 domain. Positions 46 to 48 (RKR) are mediates the preference for acidic residues at the P3' and P4' sites. Cys49 and Cys65 are joined by a disulfide. Residue His64 is the Charge relay system of the active site. Asn71 and Asn104 each carry an N-linked (GlcNAc...) asparagine glycan. The active-site Charge relay system is Asp108. Intrachain disulfides connect Cys142/Cys208 and Cys172/Cys187. A glycan (N-linked (GlcNAc...) asparagine) is linked at Asn179. The active-site Charge relay system is the Ser202.

The protein belongs to the peptidase S1 family. Granzyme subfamily. Constitutively expressed in NK cells.

The protein localises to the cytolytic granule. Its activity is regulated as follows. Inhibited by SERPINB1. In terms of biological role, cytotoxic chymotrypsin-like serine protease with preference for bulky and aromatic residues at the P1 position and acidic residues at the P3' and P4' sites. Probably necessary for target cell lysis in cell-mediated immune responses. Participates in the antiviral response via direct cleavage of several proteins essential for viral replication. The chain is Granzyme H (GZMH) from Homo sapiens (Human).